Here is a 750-residue protein sequence, read N- to C-terminus: MIIRSPEPEVKILVDRDHIKTSFEEWARPGHFSRTLAKGPDTTTWIWNLHADAHDFDSHTSDLEEISRKVFSAHFGQLSIIFLWLSGMYFHGARFSNYEAWLSDPTHIGPSAQVVWPIVGQEILNGDVGGGFRGIQITSGFFQLWRASGITSELQLYCTAIGALIFAALMLFAGWFHYHKAAPKLAWFQDVESMLNHHLAGLLGLGSLSWAGHQVHVSLPINQFLNAGVDPKEIPLPHEFILNRDLLAQLYPSFAEGATPFFTLDWSKYSDFLTFRGGLDPVTGGLWLTDIAHHHLAIAILFLIAGHMYKTNWGIGHGLKDILEAHKGPFTGQGHKGLYEILTTSWHAQLSLNLAMLGSLTIIVAHHMYSMPPYPYLATDYGTQLSLFTHHMWIGGFLIVGAAAHAAIFMVRDYDPTTRYNDLLDRVLRHRDAIISHLNWACIFLGFHSFGLYIHNDTMSALGRPQDMFSDTAIQLQPVFAQWIQNTHALAPSATAPGATTSTSLTWGGGDLVAVGGKVALLPIPLGTADFLVHHIHAFTIHVTVLILLKGVLFARSSRLIPDKANLGFRFPCDGPGRGGTCQVSAWDHVFLGLFWMYNAISVVIFHFSWKMQSDVWGSISDQGVVTHITGGNFAQSSITINGWLRDFLWAQASQVIQSYGSSLSAYGLFFLGAHFVWAFSLMFLFSGRGYWQELIESIVWAHNKLKVAPATQPRALSIVQGRAVGVTHYLLGGIATTWAFFLARIIAVG.

8 helical membrane-spanning segments follow: residues 70 to 93 (VFSA…FHGA), 156 to 179 (LYCT…FHYH), 195 to 219 (LNHH…HVSL), 291 to 309 (IAHH…GHMY), 346 to 369 (WHAQ…HHMY), 385 to 411 (LSLF…IFMV), 433 to 455 (AIIS…LYIH), and 531 to 549 (FLVH…LILL). Residues Cys573 and Cys582 each coordinate [4Fe-4S] cluster. Transmembrane regions (helical) follow at residues 589 to 610 (HVFL…HFSW) and 664 to 686 (LSAY…MFLF). His675 serves as a coordination point for chlorophyll a'. The chlorophyll a site is built by Met683 and Tyr691. Trp692 is a binding site for phylloquinone. Residues 724–744 (AVGVTHYLLGGIATTWAFFLA) form a helical membrane-spanning segment.

Belongs to the PsaA/PsaB family. In terms of assembly, the PsaA/B heterodimer binds the P700 chlorophyll special pair and subsequent electron acceptors. PSI consists of a core antenna complex that captures photons, and an electron transfer chain that converts photonic excitation into a charge separation. The eukaryotic PSI reaction center is composed of at least 11 subunits. The cofactor is P700 is a chlorophyll a/chlorophyll a' dimer, A0 is one or more chlorophyll a, A1 is one or both phylloquinones and FX is a shared 4Fe-4S iron-sulfur center..

Its subcellular location is the plastid. The protein resides in the chloroplast thylakoid membrane. It carries out the reaction reduced [plastocyanin] + hnu + oxidized [2Fe-2S]-[ferredoxin] = oxidized [plastocyanin] + reduced [2Fe-2S]-[ferredoxin]. In terms of biological role, psaA and PsaB bind P700, the primary electron donor of photosystem I (PSI), as well as the electron acceptors A0, A1 and FX. PSI is a plastocyanin-ferredoxin oxidoreductase, converting photonic excitation into a charge separation, which transfers an electron from the donor P700 chlorophyll pair to the spectroscopically characterized acceptors A0, A1, FX, FA and FB in turn. Oxidized P700 is reduced on the lumenal side of the thylakoid membrane by plastocyanin. This Daucus carota (Wild carrot) protein is Photosystem I P700 chlorophyll a apoprotein A1.